The following is a 529-amino-acid chain: Na(+)/H(+) antiporter NhaB (529 aa).

The next 12 helical transmembrane spans lie at 13-33 (FLGKAPDWYKVAIISFLIINP), 34-54 (IVFFFVDPFVAGWLLVVEFIF), 90-110 (LVANIEVLLLLVFMVAGIYFM), 113-133 (LLLFIFTKILLGIRSKAILSL), 149-166 (LTVIAVVISVAVGFYSIY), 205-225 (LLMHAGVGTALGGVTTMVGEP), 241-261 (FLIRMAPVTLPVFVCGLLTCF), 306-326 (GLIAVWLIVGLALHLAAVGLI), 327-347 (GLSVIILATAFTGVIEEHSLG), 351-371 (EEALPFTALLAVFFSIVAVII), 451-471 (ATPNGQAAFLFLLTSALAPLI), and 479-499 (VIMALPYTIVLALVGLFGIVF).

Belongs to the NhaB Na(+)/H(+) (TC 2.A.34) antiporter family.

It localises to the cell inner membrane. It carries out the reaction 2 Na(+)(in) + 3 H(+)(out) = 2 Na(+)(out) + 3 H(+)(in). In terms of biological role, na(+)/H(+) antiporter that extrudes sodium in exchange for external protons. The protein is Na(+)/H(+) antiporter NhaB of Vibrio vulnificus (strain YJ016).